The sequence spans 322 residues: SUMO-activating enzyme subunit 1A (322 aa).

An N-acetylmethionine modification is found at methionine 1.

Belongs to the ubiquitin-activating E1 family. As to quaternary structure, heterodimer of SAE1A or SAE1B and SAE2. The complex binds SUMO proteins via SAE2.

It localises to the nucleus. It functions in the pathway protein modification; protein sumoylation. In terms of biological role, the dimeric enzyme acts as an E1 ligase for SUMO1 and SUMO2. It mediates ATP-dependent activation of SUMO proteins and formation of a thioester with a conserved cysteine residue on SAE2. Functionally redundant with its paralog SAE1B. The polypeptide is SUMO-activating enzyme subunit 1A (SAE1A) (Arabidopsis thaliana (Mouse-ear cress)).